The primary structure comprises 128 residues: MSAKTDEILESLKTLTLLEAAELVKQIEEAFGVSAAAPVGGVVVAAAAGAAAEAVEEKTEFDVVLEEVPADKKIAVLKVVRGITGLGLKEAKDLVEAAPKPIKEGVSKDDAEAAKKELEEAGAKVSVK.

This sequence belongs to the bacterial ribosomal protein bL12 family. As to quaternary structure, homodimer. Part of the ribosomal stalk of the 50S ribosomal subunit. Forms a multimeric L10(L12)X complex, where L10 forms an elongated spine to which 2 to 4 L12 dimers bind in a sequential fashion. Binds GTP-bound translation factors.

In terms of biological role, forms part of the ribosomal stalk which helps the ribosome interact with GTP-bound translation factors. Is thus essential for accurate translation. The chain is Large ribosomal subunit protein bL12 from Synechococcus sp. (strain ATCC 27144 / PCC 6301 / SAUG 1402/1) (Anacystis nidulans).